The chain runs to 545 residues: MTFIKQMMPRYVASMTAGIVAAAMAATCAFAPVANADAVSPTQETIQSTGRHFMVYYRAWRDVTMKGVNTDLPDDNWISMYDIPYGVDVVNIFSYVPSGQEEQAQPFYDKLKSDYAPYLHSRGIKLVRGIDYTGVAVNGFRTFMKEQNKTESEATEADYDAYAKQVIDKYMISVGLDGLDIDMEAHPNDADVKISDNVIRALSKHIGPKSAKPDTTMFLYDTNGSYLNPFKNVAECFDYVAYQQYGSSSDRTARAAADYQPYIGNEFVPGLTFPEEGDMNNRWYDATEPYEESHFYQVASYVREHNLGGMFVYALDRDGRNYDEDLRRIVPSNLLWTKTAIAESEGMALDTAKTAANHYLDRMSLRQVIDDNAASADKARDMVGKAANLYETNKAVLGGDYGEGFSNTYDPTLEAGLLGIDISVLQQQIDKSSEIIGADTAESDAKTALRMARDAAIDGLTGKIYTADQVSAWSQALKAALDATVPVPTPDSTDQNGNRDKVTNHKVQGQPKQLSATGISTDIIVAVGVTLAIAGVALSLSRKLS.

The first 36 residues, 1 to 36 (MTFIKQMMPRYVASMTAGIVAAAMAATCAFAPVANA), serve as a signal peptide directing secretion. The GH18 domain occupies 51–333 (RHFMVYYRAW…EDLRRIVPSN (283 aa)). E184 (proton donor) is an active-site residue. The interval 486–511 (PVPTPDSTDQNGNRDKVTNHKVQGQP) is disordered. A helical transmembrane segment spans residues 518-538 (GISTDIIVAVGVTLAIAGVAL).

It belongs to the glycosyl hydrolase 18 family.

It is found in the cell membrane. The catalysed reaction is an N(4)-(oligosaccharide-(1-&gt;3)-[oligosaccharide-(1-&gt;6)]-beta-D-Man-(1-&gt;4)-beta-D-GlcNAc-(1-&gt;4)-alpha-D-GlcNAc)-L-asparaginyl-[protein] + H2O = an oligosaccharide-(1-&gt;3)-[oligosaccharide-(1-&gt;6)]-beta-D-Man-(1-&gt;4)-D-GlcNAc + N(4)-(N-acetyl-beta-D-glucosaminyl)-L-asparaginyl-[protein]. Endoglycosidase with broad specificity that cleaves the chitobiose core of high mannose and complex N-linked glycans. Is able to release N-glycans from diverse host glycoproteins such as human and bovine lactoferrin, immunoglobulins A and G, and ribonuclease B. Is active directly on human breast milk - a complex matrix of lipids, oligosaccharides, and proteins with disparate glycosylation types - successfully removing a significant proportion of the total amount of N-glycans. Does not recognize O-linked glycans or free human milk oligosaccharides (HMO). The protein is Endo-beta-N-acetylglucosaminidase of Bifidobacterium longum subsp. infantis (strain ATCC 15697 / DSM 20088 / JCM 1222 / NCTC 11817 / S12).